A 107-amino-acid chain; its full sequence is MRMRIKKGDLVEVISGKDKGKRGKVLRVLPKEDKVIVEGVNMVKRHQRPIPQLREGGIIEREAPIYACKVMVVCPACDKRTRVGYRFTEDGKKVRYCKKCGEIIDKD.

This sequence belongs to the universal ribosomal protein uL24 family. Part of the 50S ribosomal subunit.

Its function is as follows. One of two assembly initiator proteins, it binds directly to the 5'-end of the 23S rRNA, where it nucleates assembly of the 50S subunit. Functionally, one of the proteins that surrounds the polypeptide exit tunnel on the outside of the subunit. This is Large ribosomal subunit protein uL24 from Thermotoga neapolitana (strain ATCC 49049 / DSM 4359 / NBRC 107923 / NS-E).